Here is a 61-residue protein sequence, read N- to C-terminus: Small ribosomal subunit protein uS14 (61 aa).

Zn(2+) contacts are provided by cysteine 24, cysteine 27, cysteine 40, and cysteine 43.

Belongs to the universal ribosomal protein uS14 family. Zinc-binding uS14 subfamily. As to quaternary structure, part of the 30S ribosomal subunit. Contacts proteins S3 and S10. Zn(2+) serves as cofactor.

Its function is as follows. Binds 16S rRNA, required for the assembly of 30S particles and may also be responsible for determining the conformation of the 16S rRNA at the A site. This chain is Small ribosomal subunit protein uS14, found in Streptococcus mutans serotype c (strain ATCC 700610 / UA159).